The sequence spans 422 residues: Glycine amidinotransferase, mitochondrial (422 aa).

Active-site residues include aspartate 253 and histidine 302. Residue cysteine 406 is the Amidino-cysteine intermediate of the active site.

This sequence belongs to the amidinotransferase family. In terms of assembly, homodimer. Strongly expressed in neurons and glia of the brain, the lamina propria, submucosa and serosa of the small intestine, in oocytes and on the fringes of the pancreas. Not expressed in the retina, eye lens, heart or bulbus arteriosus. Expressed in the yolk syncytial layer in gastrula stage embryos, in the yolk syncytial layer and mature somites in early segmentation embryos and in the yolk syncytial layer and the liver of long-pec stage (48 hours post-fertilization) embryos.

The protein localises to the mitochondrion inner membrane. The catalysed reaction is L-arginine + glycine = guanidinoacetate + L-ornithine. The protein operates within amine and polyamine biosynthesis; creatine biosynthesis; creatine from L-arginine and glycine: step 1/2. Functionally, catalyzes the biosynthesis of guanidinoacetate, the immediate precursor of creatine. Creatine plays a vital role in energy metabolism in muscle tissues. May play a role in embryonic and central nervous system development. In Danio rerio (Zebrafish), this protein is Glycine amidinotransferase, mitochondrial.